A 343-amino-acid polypeptide reads, in one-letter code: Phospholipid phosphatase-related protein type 2 (343 aa).

3 consecutive transmembrane segments (helical) span residues 12 to 32, 69 to 89, and 129 to 149; these read FSII…VILL, VPPA…ILLG, and FLGV…AGQV. Asn165 is a glycosylation site (N-linked (GlcNAc...) asparagine). A run of 3 helical transmembrane segments spans residues 210 to 230, 239 to 259, and 266 to 286; these read AALC…VFRV, SLCL…VAEY, and VLAG…CVVH. A disordered region spans residues 290-343; that stretch reads SRPPSGRRLSPWEDLGQAPTMDSPLEKNPRSAGRIRHRHGSPHPSRRTAPAVAT. Phosphoserine occurs at positions 299 and 312. Basic residues predominate over residues 322-335; the sequence is GRIRHRHGSPHPSR.

This sequence belongs to the PA-phosphatase related phosphoesterase family.

Its subcellular location is the membrane. This is Phospholipid phosphatase-related protein type 2 from Homo sapiens (Human).